A 96-amino-acid chain; its full sequence is Co-chaperonin GroES (96 aa).

It belongs to the GroES chaperonin family. In terms of assembly, heptamer of 7 subunits arranged in a ring. Interacts with the chaperonin GroEL.

It localises to the cytoplasm. Together with the chaperonin GroEL, plays an essential role in assisting protein folding. The GroEL-GroES system forms a nano-cage that allows encapsulation of the non-native substrate proteins and provides a physical environment optimized to promote and accelerate protein folding. GroES binds to the apical surface of the GroEL ring, thereby capping the opening of the GroEL channel. This is Co-chaperonin GroES from Caulobacter sp. (strain K31).